Here is a 436-residue protein sequence, read N- to C-terminus: Glutamyl-tRNA reductase (436 aa).

Substrate is bound by residues 49 to 52 (TCNR), serine 109, 114 to 116 (EGQ), and glutamine 120. The active-site Nucleophile is the cysteine 50. 198–203 (GAGRMS) contributes to the NADP(+) binding site.

The protein belongs to the glutamyl-tRNA reductase family. In terms of assembly, homodimer.

It carries out the reaction (S)-4-amino-5-oxopentanoate + tRNA(Glu) + NADP(+) = L-glutamyl-tRNA(Glu) + NADPH + H(+). It functions in the pathway porphyrin-containing compound metabolism; protoporphyrin-IX biosynthesis; 5-aminolevulinate from L-glutamyl-tRNA(Glu): step 1/2. Its pathway is porphyrin-containing compound metabolism; chlorophyll biosynthesis. Functionally, catalyzes the NADPH-dependent reduction of glutamyl-tRNA(Glu) to glutamate 1-semialdehyde (GSA). The protein is Glutamyl-tRNA reductase of Prochlorococcus marinus (strain MIT 9301).